A 210-amino-acid chain; its full sequence is ATP-dependent Clp protease proteolytic subunit (210 aa).

The active-site Nucleophile is the Ser106. His131 is an active-site residue.

This sequence belongs to the peptidase S14 family. As to quaternary structure, fourteen ClpP subunits assemble into 2 heptameric rings which stack back to back to give a disk-like structure with a central cavity, resembling the structure of eukaryotic proteasomes.

Its subcellular location is the cytoplasm. It carries out the reaction Hydrolysis of proteins to small peptides in the presence of ATP and magnesium. alpha-casein is the usual test substrate. In the absence of ATP, only oligopeptides shorter than five residues are hydrolyzed (such as succinyl-Leu-Tyr-|-NHMec, and Leu-Tyr-Leu-|-Tyr-Trp, in which cleavage of the -Tyr-|-Leu- and -Tyr-|-Trp bonds also occurs).. Cleaves peptides in various proteins in a process that requires ATP hydrolysis. Has a chymotrypsin-like activity. Plays a major role in the degradation of misfolded proteins. This Rhodopseudomonas palustris (strain BisB18) protein is ATP-dependent Clp protease proteolytic subunit.